Here is a 226-residue protein sequence, read N- to C-terminus: Prolactin (226 aa).

The signal sequence occupies residues 1 to 29; the sequence is MNSQGSDRKAVTLLLLVMSNLLFCQNAHP. The cysteines at positions 33 and 38 are disulfide-linked. Phosphoserine occurs at positions 53 and 117. 2 cysteine pairs are disulfide-bonded: cysteine 85–cysteine 201 and cysteine 218–cysteine 226.

The protein belongs to the somatotropin/prolactin family. As to quaternary structure, interacts with PRLR.

It localises to the secreted. Its function is as follows. Prolactin acts primarily on the mammary gland by promoting lactation. This chain is Prolactin (PRL), found in Mesocricetus auratus (Golden hamster).